A 222-amino-acid polypeptide reads, in one-letter code: Probable nicotinate-nucleotide adenylyltransferase (222 aa).

Belongs to the NadD family.

It carries out the reaction nicotinate beta-D-ribonucleotide + ATP + H(+) = deamido-NAD(+) + diphosphate. It functions in the pathway cofactor biosynthesis; NAD(+) biosynthesis; deamido-NAD(+) from nicotinate D-ribonucleotide: step 1/1. Functionally, catalyzes the reversible adenylation of nicotinate mononucleotide (NaMN) to nicotinic acid adenine dinucleotide (NaAD). The polypeptide is Probable nicotinate-nucleotide adenylyltransferase (Pseudomonas syringae pv. tomato (strain ATCC BAA-871 / DC3000)).